The following is a 547-amino-acid chain: Chaperonin GroEL (547 aa).

Residues 30–33, Lys51, 87–91, Gly415, 479–481, and Asp495 contribute to the ATP site; these read TLGP, DGTTT, and NAA.

This sequence belongs to the chaperonin (HSP60) family. Forms a cylinder of 14 subunits composed of two heptameric rings stacked back-to-back. Interacts with the co-chaperonin GroES.

It localises to the cytoplasm. The catalysed reaction is ATP + H2O + a folded polypeptide = ADP + phosphate + an unfolded polypeptide.. Its function is as follows. Together with its co-chaperonin GroES, plays an essential role in assisting protein folding. The GroEL-GroES system forms a nano-cage that allows encapsulation of the non-native substrate proteins and provides a physical environment optimized to promote and accelerate protein folding. This Cupriavidus necator (strain ATCC 17699 / DSM 428 / KCTC 22496 / NCIMB 10442 / H16 / Stanier 337) (Ralstonia eutropha) protein is Chaperonin GroEL.